The following is a 148-amino-acid chain: Macrodomain Ter protein (148 aa).

Belongs to the MatP family. As to quaternary structure, homodimer.

It is found in the cytoplasm. In terms of biological role, required for spatial organization of the terminus region of the chromosome (Ter macrodomain) during the cell cycle. Prevents early segregation of duplicated Ter macrodomains during cell division. Binds specifically to matS, which is a 13 bp signature motif repeated within the Ter macrodomain. The sequence is that of Macrodomain Ter protein from Haemophilus influenzae (strain ATCC 51907 / DSM 11121 / KW20 / Rd).